A 299-amino-acid chain; its full sequence is Taste receptor type 2 member 4 (299 aa).

At 1-9 (MLWLFYSSA) the chain is on the extracellular side. A helical membrane pass occupies residues 10–30 (IIASVILDFVGIIMSLFITVV). Over 31–46 (NYKTWVKSHRISSSER) the chain is Cytoplasmic. A helical transmembrane segment spans residues 47–67 (ILFSLGITRFFMLALFLVNTI). Topologically, residues 68–81 (YFVSSNKERSVYLS) are extracellular. The chain crosses the membrane as a helical span at residues 82 to 102 (AFFVLCFMFLDSSSLWFVTLL). Residues 103-131 (NSLYCVKITNFQHSVFLLLKRNISPKIPR) are Cytoplasmic-facing. A helical transmembrane segment spans residues 132–152 (LLPACVLISAFTTCLYITLSQ). Topologically, residues 153-172 (ASPFPELVTKRNNTSFNISE) are extracellular. N-linked (GlcNAc...) asparagine glycosylation is found at asparagine 164, asparagine 165, and asparagine 169. Residues 173–193 (GILSLVVSFVLSSSLQFIINV) form a helical membrane-spanning segment. The Cytoplasmic segment spans residues 194–230 (TSASLLIYSLRRHIRKMQKNATGFWNPQTEAHVGAMK). Residues 231 to 251 (LMIYFLILYIPYSVATLVQYL) traverse the membrane as a helical segment. At 252-262 (PFYAGMDMGTK) the chain is on the extracellular side. Residues 263-283 (SICLIFATLYSPGHSVLIIIT) traverse the membrane as a helical segment. At 284–299 (HPKLKTTAKKILCFKK) the chain is on the cytoplasmic side.

It belongs to the G-protein coupled receptor T2R family.

The protein localises to the membrane. It is found in the cell projection. Its subcellular location is the cilium membrane. In terms of biological role, gustducin-coupled receptor implicated in the perception of bitter compounds in the oral cavity and the gastrointestinal tract. Signals through PLCB2 and the calcium-regulated cation channel TRPM5. In airway epithelial cells, binding of denatonium increases the intracellular calcium ion concentration and stimulates ciliary beat frequency. This chain is Taste receptor type 2 member 4 (TAS2R4), found in Papio hamadryas (Hamadryas baboon).